A 291-amino-acid polypeptide reads, in one-letter code: Trimeric intracellular cation channel type B (291 aa).

At 1–16 (MEYPWDDLTLAFSRTS) the chain is on the lumenal side. A helical membrane pass occupies residues 17-33 (MFPFFDIAHYLVSVMAL). The Cytoplasmic segment spans residues 34-47 (KQRPGAVAAAWSNP). The helical transmembrane segment at 48 to 69 (LSSWLSAMLHCFGGGILSCILL) threads the bilayer. At 70 to 80 (AEPPLKFLTNH) the chain is on the lumenal side. A helical membrane pass occupies residues 81–99 (TNILLASSIWYIVFFCPRD). Residues 100–103 (LVSQ) are Cytoplasmic-facing. The chain crosses the membrane as a helical span at residues 104–122 (GYSYQPIQLLAAGMKEVTR). 2 residues coordinate a 1,2-diacyl-sn-glycero-3-phospho-(1D-myo-inositol-4,5-bisphosphate): lysine 118 and arginine 122. The Lumenal portion of the chain corresponds to 123 to 138 (TWKIVGGVAHANGYYR). A helical transmembrane segment spans residues 139–156 (NGWIVMIAVGWARGAGGA). Residues 157–179 (IITACEQLLKGDWKPEGDEWLKM) are Cytoplasmic-facing. Residues 180 to 197 (SFPCKVTLLGSIMFTFQH) traverse the membrane as a helical segment. Residues 198 to 206 (TRHLAISKH) lie on the Lumenal side of the membrane. A helical membrane pass occupies residues 207-225 (DLMFLYTIFLVTIKVTMMM). At 226-291 (TKDAAVTLTP…SAKRHAKKED (66 aa)) the chain is on the cytoplasmic side. The tract at residues 254–291 (LSEKKAEVKPSSNGSASSASKRGTEPPSSAKRHAKKED) is disordered. Over residues 264–273 (SSNGSASSAS) the composition is skewed to low complexity.

It belongs to the TMEM38 family. In terms of assembly, homotrimer; conformation seems to be controled by binding to diacylglycerol (DAG).

The protein localises to the endoplasmic reticulum membrane. It catalyses the reaction K(+)(in) = K(+)(out). Its activity is regulated as follows. Channel activity is activated by increased cytosolic Ca(2+) levels and blocked by luminal high Ca(2+) levels. Its function is as follows. Intracellular monovalent cation channel required for maintenance of rapid intracellular calcium release. Acts as a potassium counter-ion channel that functions in synchronization with calcium release from intracellular stores. Activated by increased cytosolic Ca(2+) levels. This is Trimeric intracellular cation channel type B (Tmem38b) from Rattus norvegicus (Rat).